We begin with the raw amino-acid sequence, 269 residues long: MESSKDTQHGDALESKSCLANRTSSRQNKRTSLSSSDGTGPRVTESLGLPRVLTPSDTAAELGQKTSSSSSSSSSSAQSNRSSKVSLPEIPKEKYPEEFSLLNSQTEDGQRPEWTFYPRFSSNIHTYHIGKQCFFNGVFRGNRRSVAERTVDNSLGKKKYDIDPRNGIPKLTPGDNPYMFPEQSKEFFKAGATLPPVNFSLGPYEKKFDTFIPLEPLPKIPNLPFWEKEKANNLKNEIKEVEELDNWQVPMPFLHGFFSTGASNFSRQQ.

The span at 1 to 14 (MESSKDTQHGDALE) shows a compositional bias: basic and acidic residues. The segment at 1-92 (MESSKDTQHG…SKVSLPEIPK (92 aa)) is disordered. Residues 18–38 (CLANRTSSRQNKRTSLSSSDG) show a composition bias toward polar residues. Residue Thr-54 is modified to Phosphothreonine. The segment covering 67–86 (SSSSSSSSSSAQSNRSSKVS) has biased composition (low complexity). Phosphoserine occurs at positions 72, 75, and 82.

The polypeptide is Spermatogenesis-associated serine-rich protein 1 (Spats1) (Mus musculus (Mouse)).